A 116-amino-acid polypeptide reads, in one-letter code: Large ribosomal subunit protein bL17 (116 aa).

Belongs to the bacterial ribosomal protein bL17 family. In terms of assembly, part of the 50S ribosomal subunit. Contacts protein L32.

This is Large ribosomal subunit protein bL17 from Prochlorococcus marinus (strain MIT 9515).